The primary structure comprises 847 residues: B-cell receptor CD22 (847 aa).

A signal peptide spans Met-1–Cys-19. The 119-residue stretch at Asp-20 to Glu-138 folds into the Ig-like V-type domain. Over Asp-20–Arg-687 the chain is Extracellular. Residues Asn-67, Asn-101, and Asn-112 are each glycosylated (N-linked (GlcNAc...) asparagine). Arg-120 contributes to the N-acetylneuraminate binding site. N-linked (GlcNAc...) asparagine glycosylation is found at Asn-135, Asn-164, Asn-231, Asn-295, Asn-363, Asn-428, Asn-445, Asn-448, and Asn-479. Ig-like C2-type domains follow at residues Pro-143–Gln-235, Pro-242–Phe-324, Pro-331–Gln-416, Pro-419–Asn-500, Pro-505–Ser-582, and Pro-593–Asn-676. An intrachain disulfide couples Cys-161 to Cys-219. 2 disulfide bridges follow: Cys-265/Cys-309 and Cys-353/Cys-396. 2 cysteine pairs are disulfide-bonded: Cys-442-Cys-484 and Cys-529-Cys-571. Residues Asn-574 and Asn-634 are each glycosylated (N-linked (GlcNAc...) asparagine). Cys-616 and Cys-659 are oxidised to a cystine. The helical transmembrane segment at Val-688–Leu-708 threads the bilayer. Over Gln-709–His-847 the chain is Cytoplasmic. Phosphoserine is present on residues Ser-725, Ser-726, and Ser-729. 2 consecutive short sequence motifs (ITIM motif) follow at residues Ile-760 to Leu-765 and Val-794 to Leu-799. Tyr-762 bears the Phosphotyrosine mark. A phosphotyrosine mark is found at Tyr-807, Tyr-822, and Tyr-842. 2 consecutive short sequence motifs (ITIM motif) follow at residues Ile-820 to Leu-825 and Val-840 to Leu-845.

It belongs to the immunoglobulin superfamily. SIGLEC (sialic acid binding Ig-like lectin) family. In terms of assembly, predominantly monomer of isoform CD22-beta. Also found as heterodimer of isoform CD22-beta and a shorter isoform. Interacts with PTPN6/SHP-1, LYN, SYK, PIK3R1/PIK3R2 and PLCG1 upon phosphorylation. Interacts with GRB2, INPP5D and SHC1 upon phosphorylation. May form a complex with INPP5D/SHIP, GRB2 and SHC1. In terms of processing, phosphorylation of Tyr-762, Tyr-807 and Tyr-822 are involved in binding to SYK, GRB2 and SYK, respectively. Phosphorylation of Tyr-842 is involved in binding to SYK, PLCG2 and PIK3R1/PIK3R2. Phosphorylated on tyrosine residues by LYN.

The protein localises to the cell membrane. Its function is as follows. Most highly expressed siglec (sialic acid-binding immunoglobulin-like lectin) on B-cells that plays a role in various aspects of B-cell biology including differentiation, antigen presentation, and trafficking to bone marrow. Binds to alpha 2,6-linked sialic acid residues of surface molecules such as CD22 itself, CD45 and IgM in a cis configuration. Can also bind to ligands on other cells as an adhesion molecule in a trans configuration. Acts as an inhibitory coreceptor on the surface of B-cells and inhibits B-cell receptor induced signaling, characterized by inhibition of the calcium mobilization and cellular activation. Mechanistically, the immunoreceptor tyrosine-based inhibitory motif domain is phosphorylated by the Src kinase LYN, which in turn leads to the recruitment of the protein tyrosine phosphatase 1/PTPN6, leading to the negative regulation of BCR signaling. If this negative signaling from is of sufficient strength, apoptosis of the B-cell can be induced. This Gorilla gorilla gorilla (Western lowland gorilla) protein is B-cell receptor CD22.